Reading from the N-terminus, the 468-residue chain is Hydroxymethylglutaryl-CoA synthase B (468 aa).

The active-site Proton donor/acceptor is Glu-85. Cys-119 serves as the catalytic Acyl-thioester intermediate. Residues Cys-119, Thr-161, Ser-211, His-250, Lys-259, Asn-327, and Ser-359 each coordinate (3S)-3-hydroxy-3-methylglutaryl-CoA. The Proton donor/acceptor role is filled by His-250.

This sequence belongs to the thiolase-like superfamily. HMG-CoA synthase family.

It carries out the reaction acetoacetyl-CoA + acetyl-CoA + H2O = (3S)-3-hydroxy-3-methylglutaryl-CoA + CoA + H(+). Its pathway is metabolic intermediate biosynthesis; (R)-mevalonate biosynthesis; (R)-mevalonate from acetyl-CoA: step 2/3. Functionally, condenses acetyl-CoA with acetoacetyl-CoA to form HMG-CoA, which is the substrate for HMG-CoA reductase. The polypeptide is Hydroxymethylglutaryl-CoA synthase B (hgsB) (Dictyostelium discoideum (Social amoeba)).